The following is a 561-amino-acid chain: Urocanate hydratase (561 aa).

NAD(+) is bound by residues 52–53 (GG), Q130, 176–178 (GMG), E196, R201, 242–243 (NA), 263–267 (QTSAH), 273–274 (YL), and Y322. Residue C410 is part of the active site. G492 contributes to the NAD(+) binding site.

Belongs to the urocanase family. NAD(+) is required as a cofactor.

The protein resides in the cytoplasm. The catalysed reaction is 4-imidazolone-5-propanoate = trans-urocanate + H2O. It functions in the pathway amino-acid degradation; L-histidine degradation into L-glutamate; N-formimidoyl-L-glutamate from L-histidine: step 2/3. Its function is as follows. Catalyzes the conversion of urocanate to 4-imidazolone-5-propionate. This Citrobacter koseri (strain ATCC BAA-895 / CDC 4225-83 / SGSC4696) protein is Urocanate hydratase.